The following is a 403-amino-acid chain: MAACGKTNKSHVIFKKVSRDKSVTIYLGKRDYVDHVSQVEPVDGVVLVDPELVKGKKVYVTLTCAFRYGQEDIDVMGLTFRRDLYFSRVQVYPPVGAMSVLTQLQESLLKKLGDNTYPFLLTFPDYLPCSVMLQPAPQDVGKSCGVDFEVKAFASDITDPEEDKIPKKSSVRLLIRKVQHAPPEMGPQPSAEASWQFFMSDKPLNLSVSLSKEIYFHGEPIPVTVTVTNNTDKVVKKIKVSVEQIANVVLYSSDYYVKPVASEETQEKVQPNSTLTKTLVLVPLLANNRERRGIALDGKIKHEDTNLASSTIIKEGIDRTVMGILVSYHIKVKLTVSGFLGELTSSEVATEVPFRLMHPQPEDPAKESVQDENLVFEEFARQNLKDTGENTEGKKDEDAGQDE.

An interaction with RHO region spans residues 11–19; it reads HVIFKKVSR. The residue at position 231 (Thr-231) is a Phosphothreonine. The disordered stretch occupies residues 381–403; it reads RQNLKDTGENTEGKKDEDAGQDE.

Belongs to the arrestin family. Monomer. Homodimer. Homotetramer. Interacts with RHO (via the phosphorylated C-terminus). In terms of tissue distribution, detected in retina (at protein level).

The protein localises to the cell projection. It localises to the cilium. Its subcellular location is the photoreceptor outer segment. The protein resides in the membrane. In terms of biological role, binds to photoactivated, phosphorylated RHO and terminates RHO signaling via G-proteins by competing with G-proteins for the same binding site on RHO. May play a role in preventing light-dependent degeneration of retinal photoreceptor cells. The chain is S-arrestin (Sag) from Mus musculus (Mouse).